Here is a 451-residue protein sequence, read N- to C-terminus: UDP-N-acetylmuramoylalanine--D-glutamate ligase (451 aa).

118–124 contacts ATP; sequence GTKGKST.

The protein belongs to the MurCDEF family.

It localises to the cytoplasm. The catalysed reaction is UDP-N-acetyl-alpha-D-muramoyl-L-alanine + D-glutamate + ATP = UDP-N-acetyl-alpha-D-muramoyl-L-alanyl-D-glutamate + ADP + phosphate + H(+). Its pathway is cell wall biogenesis; peptidoglycan biosynthesis. Functionally, cell wall formation. Catalyzes the addition of glutamate to the nucleotide precursor UDP-N-acetylmuramoyl-L-alanine (UMA). In Borreliella burgdorferi (strain ATCC 35210 / DSM 4680 / CIP 102532 / B31) (Borrelia burgdorferi), this protein is UDP-N-acetylmuramoylalanine--D-glutamate ligase (murD).